We begin with the raw amino-acid sequence, 192 residues long: E3 ubiquitin-protein ligase RNF185 (192 aa).

Positions 1-13 (MASKGPSASASTE) are enriched in polar residues. The disordered stretch occupies residues 1 to 30 (MASKGPSASASTENSNAGGPSGSSNGTGES). The Cytoplasmic portion of the chain corresponds to 1 to 130 (MASKGPSASA…GGFQGFGFGD (130 aa)). Over residues 14-27 (NSNAGGPSGSSNGT) the composition is skewed to low complexity. Positions 29–80 (ESGGQDSTFECNICLDTAKDAVISLCGHLFCWPCLHQWLETRPNRQVCPVCK) are required for ubiquitin ligase activity and protection against ER stress-induced cell death. The RING-type zinc-finger motif lies at 39–80 (CNICLDTAKDAVISLCGHLFCWPCLHQWLETRPNRQVCPVCK). The interval 90 to 123 (PLYGRGSTGQQDPREKTPPRPQGQRPEPENRGGF) is disordered. The chain crosses the membrane as a helical span at residues 131 to 151 (GGFQMSFGIGAFPFGIFATAF). The Mitochondrial intermembrane portion of the chain corresponds to 152 to 171 (NINDGRPPPAVPGTPQYVDE). The helical transmembrane segment at 172–192 (QFLSRLFLFVALVIMFWLLIA) threads the bilayer.

Interacts with ATG5 and BNIP1. Ubiquitously expressed with high expression in testis.

The protein localises to the mitochondrion outer membrane. It localises to the endoplasmic reticulum membrane. It catalyses the reaction S-ubiquitinyl-[E2 ubiquitin-conjugating enzyme]-L-cysteine + [acceptor protein]-L-lysine = [E2 ubiquitin-conjugating enzyme]-L-cysteine + N(6)-ubiquitinyl-[acceptor protein]-L-lysine.. The protein operates within protein modification; protein ubiquitination. Functionally, E3 ubiquitin-protein ligase that regulates selective mitochondrial autophagy by mediating 'Lys-63'-linked polyubiquitination of BNIP1. Acts in the endoplasmic reticulum (ER)-associated degradation (ERAD) pathway, which targets misfolded proteins that accumulate in the endoplasmic reticulum (ER) for ubiquitination and subsequent proteasome-mediated degradation. Protects cells from ER stress-induced apoptosis. Responsible for the cotranslational ubiquitination and degradation of CFTR in the ERAD pathway. Also acts as a regulator of the innate antiviral response by catalyzing 'Lys-27'-linked polyubiquitination of CGAS, thereby promoting CGAS cyclic GMP-AMP synthase activity. Preferentially associates with the E2 enzymes UBE2J1 and UBE2J2. The chain is E3 ubiquitin-protein ligase RNF185 (Rnf185) from Mus musculus (Mouse).